Here is a 104-residue protein sequence, read N- to C-terminus: DET1- and DDB1-associated protein 1 (104 aa).

The span at 67–77 (KKNAAKKREQE) shows a compositional bias: basic and acidic residues. The disordered stretch occupies residues 67–104 (KKNAAKKREQEQAEGEGGSPAPPRKIARTDSQEMNEDS).

The protein belongs to the DDA1 family. In terms of assembly, component of numerous DCX (DDB1-CUL4-X-box) E3 ubiquitin-protein ligase complexes which consist of a core of DDB1, cullin-4 (CUL4A or CUL4B), DDA1 and RBX1.

It functions in the pathway protein modification; protein ubiquitination. Functionally, functions as a component of numerous distinct DCX (DDB1-CUL4-X-box) E3 ubiquitin-protein ligase complexes which mediate the ubiquitination and subsequent proteasomal degradation of target proteins. In the DCX complexes, acts as a scaffolding subunit required to stabilize the complex. This chain is DET1- and DDB1-associated protein 1, found in Danio rerio (Zebrafish).